The primary structure comprises 505 residues: ATP synthase subunit alpha (505 aa).

170-177 (GDRQTGKT) contacts ATP.

The protein belongs to the ATPase alpha/beta chains family. F-type ATPases have 2 components, CF(1) - the catalytic core - and CF(0) - the membrane proton channel. CF(1) has five subunits: alpha(3), beta(3), gamma(1), delta(1), epsilon(1). CF(0) has four main subunits: a(1), b(1), b'(1) and c(9-12).

It localises to the cellular thylakoid membrane. It catalyses the reaction ATP + H2O + 4 H(+)(in) = ADP + phosphate + 5 H(+)(out). Produces ATP from ADP in the presence of a proton gradient across the membrane. The alpha chain is a regulatory subunit. This chain is ATP synthase subunit alpha, found in Prochlorococcus marinus subsp. pastoris (strain CCMP1986 / NIES-2087 / MED4).